A 74-amino-acid chain; its full sequence is Defensin J1-2 (74 aa).

The N-terminal stretch at 1 to 27 (MAGFSKVIATIFLMMMLVFATGMVAEA) is a signal peptide. Disulfide bonds link Cys30–Cys74, Cys41–Cys61, Cys47–Cys68, and Cys51–Cys70.

Belongs to the DEFL family. In terms of assembly, monomer. In terms of tissue distribution, expressed in flowers and in young fruits.

The protein resides in the secreted. In terms of biological role, plant defense peptide with antifungal activity against F.oxysporum and B.cinerea. This chain is Defensin J1-2, found in Capsicum annuum (Capsicum pepper).